The primary structure comprises 306 residues: Ribonuclease Z (306 aa).

7 residues coordinate Zn(2+): His63, His65, Asp67, His68, His140, Asp211, and His269. The active-site Proton acceptor is Asp67.

Belongs to the RNase Z family. Homodimer. Zn(2+) is required as a cofactor.

The enzyme catalyses Endonucleolytic cleavage of RNA, removing extra 3' nucleotides from tRNA precursor, generating 3' termini of tRNAs. A 3'-hydroxy group is left at the tRNA terminus and a 5'-phosphoryl group is left at the trailer molecule.. Zinc phosphodiesterase, which displays some tRNA 3'-processing endonuclease activity. Probably involved in tRNA maturation, by removing a 3'-trailer from precursor tRNA. The protein is Ribonuclease Z of Listeria welshimeri serovar 6b (strain ATCC 35897 / DSM 20650 / CCUG 15529 / CIP 8149 / NCTC 11857 / SLCC 5334 / V8).